Here is a 438-residue protein sequence, read N- to C-terminus: Aspartate--tRNA(Asp/Asn) ligase (438 aa).

Glu-176 contacts L-aspartate. Residues 198–201 (QLYK) are aspartate. Arg-220 contacts L-aspartate. ATP contacts are provided by residues 220-222 (RAE), 228-230 (RHL), and Glu-361. Mg(2+)-binding residues include Glu-361 and Ser-364. Residues Ser-364 and Arg-368 each coordinate L-aspartate. 409–412 (GADR) serves as a coordination point for ATP.

It belongs to the class-II aminoacyl-tRNA synthetase family. Type 2 subfamily. In terms of assembly, homodimer. Mg(2+) serves as cofactor.

The protein resides in the cytoplasm. It catalyses the reaction tRNA(Asx) + L-aspartate + ATP = L-aspartyl-tRNA(Asx) + AMP + diphosphate. Aspartyl-tRNA synthetase with relaxed tRNA specificity since it is able to aspartylate not only its cognate tRNA(Asp) but also tRNA(Asn). Reaction proceeds in two steps: L-aspartate is first activated by ATP to form Asp-AMP and then transferred to the acceptor end of tRNA(Asp/Asn). The chain is Aspartate--tRNA(Asp/Asn) ligase from Methanococcus vannielii (strain ATCC 35089 / DSM 1224 / JCM 13029 / OCM 148 / SB).